A 270-amino-acid chain; its full sequence is Cytochrome c oxidase subunit 3 (270 aa).

7 helical membrane-spanning segments follow: residues 21 to 41, 46 to 66, 90 to 110, 131 to 151, 167 to 187, 205 to 225, and 248 to 268; these read PWPF…VLYF, GSLV…FVWW, GIML…WAFF, FFSP…SGCA, AIFS…FQIY, FFMI…FLFV, and WYWH…YWWG.

This sequence belongs to the cytochrome c oxidase subunit 3 family. In terms of assembly, component of the cytochrome c oxidase (complex IV, CIV), a multisubunit enzyme composed of a catalytic core of 3 subunits and several supernumerary subunits. The complex exists as a monomer or a dimer and forms supercomplexes (SCs) in the inner mitochondrial membrane with ubiquinol-cytochrome c oxidoreductase (cytochrome b-c1 complex, complex III, CIII).

Its subcellular location is the mitochondrion inner membrane. The catalysed reaction is 4 Fe(II)-[cytochrome c] + O2 + 8 H(+)(in) = 4 Fe(III)-[cytochrome c] + 2 H2O + 4 H(+)(out). Functionally, component of the cytochrome c oxidase, the last enzyme in the mitochondrial electron transport chain which drives oxidative phosphorylation. The respiratory chain contains 3 multisubunit complexes succinate dehydrogenase (complex II, CII), ubiquinol-cytochrome c oxidoreductase (cytochrome b-c1 complex, complex III, CIII) and cytochrome c oxidase (complex IV, CIV), that cooperate to transfer electrons derived from NADH and succinate to molecular oxygen, creating an electrochemical gradient over the inner membrane that drives transmembrane transport and the ATP synthase. Cytochrome c oxidase is the component of the respiratory chain that catalyzes the reduction of oxygen to water. Electrons originating from reduced cytochrome c in the intermembrane space (IMS) are transferred via the dinuclear copper A center (CU(A)) of subunit 2 and heme A of subunit 1 to the active site in subunit 1, a binuclear center (BNC) formed by heme A3 and copper B (CU(B)). The BNC reduces molecular oxygen to 2 water molecules using 4 electrons from cytochrome c in the IMS and 4 protons from the mitochondrial matrix. In Cyanidium caldarium (Red alga), this protein is Cytochrome c oxidase subunit 3 (COX3).